Consider the following 358-residue polypeptide: Very long chain fatty acid elongase AAEL008004 (358 aa).

7 helical membrane-spanning segments follow: residues 26-46 (WPLMSSPFPTLALCLGYVYLV), 66-86 (LILYNFVQVVFSAWLFYEIGI), 115-135 (ACWWYYFSKFTEFFDTFFFVM), 147-167 (VIHHGCMPMSVWFGVKFTPGG), 171-191 (FFGLLNTFVHIVMYTYYLFTA), 207-227 (TSLQMVQFVAIMVHAFQLLFI), and 234-254 (AFVWWIGMHAVMFLFLFNEFY). Residues 285 to 295 (SAVSSNGSAIT) show a composition bias toward polar residues. Residues 285 to 322 (SAVSSNGSAITANGHHGKNGSVHHHSNGSATSNGTSLL) form a disordered region. Residues 299–310 (HHGKNGSVHHHS) are compositionally biased toward basic residues. The span at 311–322 (NGSATSNGTSLL) shows a compositional bias: polar residues.

It belongs to the ELO family.

Its subcellular location is the membrane. It carries out the reaction a very-long-chain acyl-CoA + malonyl-CoA + H(+) = a very-long-chain 3-oxoacyl-CoA + CO2 + CoA. Could be implicated in synthesis of very long chain fatty acids. The polypeptide is Very long chain fatty acid elongase AAEL008004 (Aedes aegypti (Yellowfever mosquito)).